We begin with the raw amino-acid sequence, 98 residues long: Cell cycle protein GpsB (98 aa).

A coiled-coil region spans residues 34-72 (LDMVIKDYEAFHQEIEELQQENLQLKKQLEEANKRQPAQ).

The protein belongs to the GpsB family. As to quaternary structure, forms polymers through the coiled coil domains. Interacts with PBP1, MreC and EzrA.

It localises to the cytoplasm. Its function is as follows. Divisome component that associates with the complex late in its assembly, after the Z-ring is formed, and is dependent on DivIC and PBP2B for its recruitment to the divisome. Together with EzrA, is a key component of the system that regulates PBP1 localization during cell cycle progression. Its main role could be the removal of PBP1 from the cell pole after pole maturation is completed. Also contributes to the recruitment of PBP1 to the division complex. Not essential for septum formation. The sequence is that of Cell cycle protein GpsB from Bacillus licheniformis (strain ATCC 14580 / DSM 13 / JCM 2505 / CCUG 7422 / NBRC 12200 / NCIMB 9375 / NCTC 10341 / NRRL NRS-1264 / Gibson 46).